Consider the following 224-residue polypeptide: Claudin-17 (224 aa).

The Cytoplasmic portion of the chain corresponds to 1–7 (MAFYPLQ). Residues 8–28 (IAGLVLGFFGLVGTIGTTLLP) form a helical membrane-spanning segment. The Extracellular portion of the chain corresponds to 29 to 81 (QWRVSAFIGSNIIIFERIWEGLWMNCIQQAMVTLQCKFYNSILALPPVLEAAR). The helical transmembrane segment at 82 to 102 (ALMCVAVALALVALIIGICGM) threads the bilayer. The Cytoplasmic segment spans residues 103–124 (KQLQCTGSSERVKAYLLGTSGV). Residues 125 to 145 (LFILTGIFVLIPVSWTANIII) form a helical membrane-spanning segment. At 146-164 (RDFYDPTVHAGQKRELGGA) the chain is on the extracellular side. The chain crosses the membrane as a helical span at residues 165-185 (LFLGWATAAVLFIGGGLLCGY). Over 186 to 224 (CCCNRKERWHRYPVPAYRVPQKDNQRNVTVPRKSSTSYV) the chain is Cytoplasmic.

It belongs to the claudin family. In terms of assembly, does not form homotypic polymeric strands and it is not sufficient to form tight junctions by its own. Interacts with OCLN. In terms of tissue distribution, expressed at high levels in the kidney and at mucher lower levels in the brain. In the kidney, expression gradually decreases from the proximal tubule downstream to the distal convoluted tubule. Expressed in the thin ascending limb of Henle's loop, as well as in the thick ascending limb of Henle's loop. In the distal convoluted tubules, expressed only in a few tubules. Not detected in the collecting duct. In the brain, expressed in blood vessels (at protein level).

Its subcellular location is the cell junction. The protein localises to the tight junction. The protein resides in the cell membrane. It carries out the reaction chloride(in) = chloride(out). The catalysed reaction is hydrogencarbonate(in) = hydrogencarbonate(out). It catalyses the reaction bromide(in) = bromide(out). The enzyme catalyses iodide(out) = iodide(in). It carries out the reaction fluoride(in) = fluoride(out). The catalysed reaction is nitrate(in) = nitrate(out). It catalyses the reaction thiocyanate(in) = thiocyanate(out). Functionally, channel-forming tight junction protein with selectivity for anions, including chloride and hydrogencarbonate, and for solutes smaller than 9 Angstrom in diameter. In the kidney proximal tubule, may be involved in quantitative reabsorption of filtered anions. Does not affect water permeability. This chain is Claudin-17 (Cldn17), found in Mus musculus (Mouse).